Reading from the N-terminus, the 283-residue chain is MEGYKSFLAFLVSSLLLGFLGVIFTLVWVLHWREGLGWDGGAAEFNWHPVLVTSGFIFIQGIAIIVYRLPWTWKCSKLLMKFIHAGLHLTALIFTIVALVAVFDFHNAKNIPNMYSLHSWIGLTVVILYALQLVLGVSIYLLPFASNTLRAALMPVHVYSGLFIFGTVIATALMGITEKLIFSLKEPPYSKLPPEAIFVNTFGLLILVFGGLVVWMVTTPAWKRPREQGMEILSPTVSSPDETEEGSTITDCSNTEKSDVELNSEAARKRILKLDEAGQRSTM.

Residues 1–5 (MEGYK) lie on the Cytoplasmic side of the membrane. A helical membrane pass occupies residues 6-30 (SFLAFLVSSLLLGFLGVIFTLVWVL). The region spanning 13–218 (SSLLLGFLGV…FGGLVVWMVT (206 aa)) is the Cytochrome b561 domain. The Extracellular segment spans residues 31 to 45 (HWREGLGWDGGAAEF). Residues 46-67 (NWHPVLVTSGFIFIQGIAIIVY) form a helical membrane-spanning segment. Heme b contacts are provided by His-48, Arg-68, and Lys-77. The Cytoplasmic segment spans residues 68 to 76 (RLPWTWKCS). L-ascorbate-binding residues include Lys-77 and Lys-81. Residues 77–103 (KLLMKFIHAGLHLTALIFTIVALVAVF) traverse the membrane as a helical segment. His-84 is a binding site for heme b. At 104-116 (DFHNAKNIPNMYS) the chain is on the extracellular side. His-106 is a Fe(3+) binding site. Residues 113-116 (NMYS) and His-118 each bind heme b. The chain crosses the membrane as a helical span at residues 117–142 (LHSWIGLTVVILYALQLVLGVSIYLL). Topologically, residues 143-149 (PFASNTL) are cytoplasmic. Arg-150 contacts L-ascorbate. A helical membrane pass occupies residues 150 to 177 (RAALMPVHVYSGLFIFGTVIATALMGIT). 2 residues coordinate heme b: His-157 and Glu-178. The Extracellular segment spans residues 178-195 (EKLIFSLKEPPYSKLPPE). Residues 196–220 (AIFVNTFGLLILVFGGLVVWMVTTP) traverse the membrane as a helical segment. Over 221–283 (AWKRPREQGM…LDEAGQRSTM (63 aa)) the chain is Cytoplasmic. Lys-223 lines the heme b pocket. The tract at residues 234–262 (SPTVSSPDETEEGSTITDCSNTEKSDVEL) is disordered. Positions 235–253 (PTVSSPDETEEGSTITDCS) are enriched in polar residues.

As to quaternary structure, homodimer. Requires heme b as cofactor.

It is found in the cell membrane. The protein localises to the apical cell membrane. The enzyme catalyses Fe(3+)(out) + L-ascorbate(in) = monodehydro-L-ascorbate radical(in) + Fe(2+)(out) + H(+). The catalysed reaction is Cu(2+)(out) + L-ascorbate(in) = Cu(+)(out) + monodehydro-L-ascorbate radical(in) + H(+). It catalyses the reaction monodehydro-L-ascorbate radical(out) + L-ascorbate(in) = monodehydro-L-ascorbate radical(in) + L-ascorbate(out). Plasma membrane reductase that uses cytoplasmic ascorbate as an electron donor to reduce extracellular Fe(3+) into Fe(2+). It is also able to reduce extracellular monodehydro-L-ascorbate and may be involved in extracellular ascorbate regeneration. May also function as a cupric transmembrane reductase. The sequence is that of Plasma membrane ascorbate-dependent reductase CYBRD1 (cybrd1) from Xenopus laevis (African clawed frog).